The sequence spans 395 residues: Chalcone synthase 3 (395 aa).

V2 is modified (N-acetylvaline). C169 is a catalytic residue.

Belongs to the thiolase-like superfamily. Chalcone/stilbene synthases family.

The catalysed reaction is (E)-4-coumaroyl-CoA + 3 malonyl-CoA + 3 H(+) = 2',4,4',6'-tetrahydroxychalcone + 3 CO2 + 4 CoA. The protein operates within secondary metabolite biosynthesis; flavonoid biosynthesis. The primary product of this enzyme is 4,2',4',6'-tetrahydroxychalcone (also termed naringenin-chalcone or chalcone) which can under specific conditions spontaneously isomerize into naringenin. The protein is Chalcone synthase 3 (CHS3) of Sinapis alba (White mustard).